We begin with the raw amino-acid sequence, 254 residues long: MPQQIELRNIALQAAQPLVHGVSLTLQRGRVLALVGGSGSGKSLTCAATLGILPAGVRQTAGEILADGKPVSPCALRGIKIATIMQNPRSAFNPLHTMHTHARETCLALGKPADDATLTAAIEAVGLENAARVLKLYPFEMSGGMLQRMMIAMAVLCESPFIIADEPTTDLDVVAQARILDLLESIMQKQAPGMLLVTHDMGVVARLADDVAVMSHGKIVEQGDVETLFNAPKHAVTRSLVSAHLALYGMELAS.

Residues 2–241 form the ABC transporter domain; sequence PQQIELRNIA…PKHAVTRSLV (240 aa). ATP is bound at residue 36-43; that stretch reads GGSGSGKS.

This sequence belongs to the ABC transporter superfamily. Nickel importer (TC 3.A.1.5.3) family. The complex is composed of two ATP-binding proteins (NikD and NikE), two transmembrane proteins (NikB and NikC) and a solute-binding protein (NikA).

The protein resides in the cell inner membrane. It catalyses the reaction Ni(2+)(out) + ATP + H2O = Ni(2+)(in) + ADP + phosphate + H(+). Its function is as follows. Part of the ABC transporter complex NikABCDE involved in nickel import. Responsible for energy coupling to the transport system. This Escherichia coli (strain UTI89 / UPEC) protein is Nickel import ATP-binding protein NikD.